The chain runs to 323 residues: Ferrochelatase (323 aa).

The Fe cation site is built by histidine 196 and glutamate 277.

This sequence belongs to the ferrochelatase family.

It is found in the cytoplasm. It catalyses the reaction heme b + 2 H(+) = protoporphyrin IX + Fe(2+). It functions in the pathway porphyrin-containing compound metabolism; protoheme biosynthesis; protoheme from protoporphyrin-IX: step 1/1. Functionally, catalyzes the ferrous insertion into protoporphyrin IX. The protein is Ferrochelatase of Haemophilus influenzae (strain PittEE).